Consider the following 643-residue polypeptide: U3 small nucleolar RNA-associated protein 5 (643 aa).

WD repeat units lie at residues 14–54 (GQYL…LYLE), 55–98 (DSKL…VTYK), 186–225 (GHVS…TKCV), 227–266 (VAES…SSTK), 340–389 (SADR…LEQE), and 471–511 (RLKP…IHGG). The interval 565-643 (HSSEPVVEED…EAGYSDVEME (79 aa)) is disordered. Acidic residues predominate over residues 570–611 (VVEEDEDDVEYNEELDDAGLIEDGEESYGSEEEEEGDSDNEE). A compositionally biased stretch (basic and acidic residues) spans 612 to 626 (EQKHTSSKQDGRLET). The span at 627–643 (EQSDGEEEAGYSDVEME) shows a compositional bias: acidic residues.

Belongs to the UTP5 family. As to quaternary structure, interacts with snoRNA U3. Interacts with MPP10. Component of the ribosomal small subunit (SSU) processome composed of at least 40 protein subunits and snoRNA U3. In the absence of snoRNA3, forms a complex with other t-UTPs. This complex can associate with pre-18S ribosomal RNAs.

It is found in the nucleus. The protein resides in the nucleolus. In terms of biological role, involved in nucleolar processing of pre-18S ribosomal RNA. Required for optimal pre-ribosomal RNA transcription by RNA polymerase I together with a subset of U3 proteins required for transcription (t-UTPs). The sequence is that of U3 small nucleolar RNA-associated protein 5 (UTP5) from Saccharomyces cerevisiae (strain ATCC 204508 / S288c) (Baker's yeast).